The primary structure comprises 246 residues: Putative carboxymethylenebutenolidase (246 aa).

Active-site residues include cysteine 127, aspartate 183, and histidine 215.

The protein belongs to the dienelactone hydrolase family.

The catalysed reaction is 2-(5-oxo-2,5-dihydrofuran-2-ylidene)acetate + H2O = 4-oxohex-2-enedioate + H(+). The polypeptide is Putative carboxymethylenebutenolidase (Synechocystis sp. (strain ATCC 27184 / PCC 6803 / Kazusa)).